The sequence spans 277 residues: Phosphatidylglycerol--prolipoprotein diacylglyceryl transferase (277 aa).

Transmembrane regions (helical) follow at residues 11–31, 55–75, 93–113, and 117–137; these read IIFS…LISF, LLYI…IIFY, GGMS…YLSL, and VKIL…LGAG. R138 is a binding site for a 1,2-diacyl-sn-glycero-3-phospho-(1'-sn-glycerol). 3 helical membrane passes run 192–212, 220–240, and 256–276; these read PSQL…IYFF, GSIS…SEFF, and MGQI…NLFI.

This sequence belongs to the Lgt family.

The protein resides in the cell inner membrane. It catalyses the reaction L-cysteinyl-[prolipoprotein] + a 1,2-diacyl-sn-glycero-3-phospho-(1'-sn-glycerol) = an S-1,2-diacyl-sn-glyceryl-L-cysteinyl-[prolipoprotein] + sn-glycerol 1-phosphate + H(+). Its pathway is protein modification; lipoprotein biosynthesis (diacylglyceryl transfer). Catalyzes the transfer of the diacylglyceryl group from phosphatidylglycerol to the sulfhydryl group of the N-terminal cysteine of a prolipoprotein, the first step in the formation of mature lipoproteins. This chain is Phosphatidylglycerol--prolipoprotein diacylglyceryl transferase, found in Buchnera aphidicola subsp. Schizaphis graminum (strain Sg).